The chain runs to 192 residues: Phosphomevalonate kinase (192 aa).

Residues 17–23 and R141 contribute to the ATP site; that span reads KRKSGKD. N170 serves as a coordination point for substrate. The ATP site is built by H171, R176, and Q180.

As to quaternary structure, monomer. In terms of tissue distribution, heart, liver, skeletal muscle, kidney, and pancreas. Lower level in brain, placenta and lung.

It is found in the cytoplasm. It localises to the cytosol. It carries out the reaction (R)-5-phosphomevalonate + ATP = (R)-5-diphosphomevalonate + ADP. It functions in the pathway isoprenoid biosynthesis; isopentenyl diphosphate biosynthesis via mevalonate pathway; isopentenyl diphosphate from (R)-mevalonate: step 2/3. In terms of biological role, catalyzes the reversible ATP-dependent phosphorylation of mevalonate 5-phosphate to produce mevalonate diphosphate and ADP, a key step in the mevalonic acid mediated biosynthesis of isopentenyl diphosphate and other polyisoprenoid metabolites. The sequence is that of Phosphomevalonate kinase (PMVK) from Homo sapiens (Human).